We begin with the raw amino-acid sequence, 482 residues long: Exodeoxyribonuclease I (482 aa).

The region spanning Leu13–Leu194 is the Exonuclease domain. Positions 16, 18, and 187 each coordinate Mg(2+). Glu18 is a binding site for substrate. In terms of domain architecture, ExoI SH3-like spans Pro203–Asn351. Residues Asn355–Tyr471 form the ExoI C-terminal domain.

In terms of assembly, monomer. Interacts with ssb (via C-terminus); this interaction stimulates the exonuclease activity by recruiting the enzyme to its substrate. Mg(2+) is required as a cofactor.

It catalyses the reaction Exonucleolytic cleavage in the 3'- to 5'-direction to yield nucleoside 5'-phosphates.. Its function is as follows. Degrades single-stranded DNA (ssDNA) in a highly processive manner. Also functions as a DNA deoxyribophosphodiesterase that releases deoxyribose-phosphate moieties following the cleavage of DNA at an apurinic/apyrimidinic (AP) site by either an AP endonuclease or AP lyase. The sequence is that of Exodeoxyribonuclease I (sbcB) from Buchnera aphidicola subsp. Schizaphis graminum (strain Sg).